A 113-amino-acid chain; its full sequence is Small ribosomal subunit protein uS14m (113 aa).

The protein belongs to the universal ribosomal protein uS14 family. In terms of assembly, component of the mitochondrial small ribosomal subunit (mt-SSU). Mature N.crassa 74S mitochondrial ribosomes consist of a small (37S) and a large (54S) subunit. The 37S small subunit contains a 16S ribosomal RNA (16S mt-rRNA) and 32 different proteins. The 54S large subunit contains a 23S rRNA (23S mt-rRNA) and 42 different proteins.

The protein resides in the mitochondrion. Functionally, component of the mitochondrial ribosome (mitoribosome), a dedicated translation machinery responsible for the synthesis of mitochondrial genome-encoded proteins, including at least some of the essential transmembrane subunits of the mitochondrial respiratory chain. The mitoribosomes are attached to the mitochondrial inner membrane and translation products are cotranslationally integrated into the membrane. The chain is Small ribosomal subunit protein uS14m (mrp2) from Neurospora crassa (strain ATCC 24698 / 74-OR23-1A / CBS 708.71 / DSM 1257 / FGSC 987).